The chain runs to 354 residues: S-adenosylmethionine:tRNA ribosyltransferase-isomerase (354 aa).

The protein belongs to the QueA family. In terms of assembly, monomer.

The protein resides in the cytoplasm. It carries out the reaction 7-aminomethyl-7-carbaguanosine(34) in tRNA + S-adenosyl-L-methionine = epoxyqueuosine(34) in tRNA + adenine + L-methionine + 2 H(+). Its pathway is tRNA modification; tRNA-queuosine biosynthesis. Its function is as follows. Transfers and isomerizes the ribose moiety from AdoMet to the 7-aminomethyl group of 7-deazaguanine (preQ1-tRNA) to give epoxyqueuosine (oQ-tRNA). This is S-adenosylmethionine:tRNA ribosyltransferase-isomerase from Salmonella paratyphi C (strain RKS4594).